The sequence spans 379 residues: Homoserine O-succinyltransferase (379 aa).

The AB hydrolase-1 domain occupies 51 to 360 (NAVLICHALS…DAPQGHDAFL (310 aa)). The active-site Nucleophile is S157. Residue R227 coordinates substrate. Catalysis depends on residues D323 and H356. D357 contacts substrate.

The protein belongs to the AB hydrolase superfamily. MetX family. Homodimer.

It is found in the cytoplasm. It catalyses the reaction L-homoserine + succinyl-CoA = O-succinyl-L-homoserine + CoA. The protein operates within amino-acid biosynthesis; L-methionine biosynthesis via de novo pathway; O-succinyl-L-homoserine from L-homoserine: step 1/1. Its activity is regulated as follows. Requires MetW for activity. Functionally, transfers a succinyl group from succinyl-CoA to L-homoserine, forming succinyl-L-homoserine. The sequence is that of Homoserine O-succinyltransferase from Pseudomonas syringae pv. syringae (strain B728a).